We begin with the raw amino-acid sequence, 591 residues long: Probable acetolactate synthase large subunit (591 aa).

Residue Glu47 coordinates thiamine diphosphate. FAD contacts are provided by residues Arg149, 258 to 279 (HGTK…IGCR), and 301 to 320 (DIDP…IVGD). Residues 396 to 476 (QNQMWMAHFF…VVICIFDNRT (81 aa)) form a thiamine pyrophosphate binding region. Mg(2+) contacts are provided by Asp447 and Asn474.

It belongs to the TPP enzyme family. In terms of assembly, dimer of large and small chains. Mg(2+) serves as cofactor. It depends on thiamine diphosphate as a cofactor.

It catalyses the reaction 2 pyruvate + H(+) = (2S)-2-acetolactate + CO2. It participates in amino-acid biosynthesis; L-isoleucine biosynthesis; L-isoleucine from 2-oxobutanoate: step 1/4. It functions in the pathway amino-acid biosynthesis; L-valine biosynthesis; L-valine from pyruvate: step 1/4. The sequence is that of Probable acetolactate synthase large subunit (ilvB) from Methanocaldococcus jannaschii (strain ATCC 43067 / DSM 2661 / JAL-1 / JCM 10045 / NBRC 100440) (Methanococcus jannaschii).